A 261-amino-acid chain; its full sequence is Type III pantothenate kinase (261 aa).

6–13 (DAGNTNVV) contributes to the ATP binding site. 108 to 111 (GADR) lines the substrate pocket. Residue Asp-110 is the Proton acceptor of the active site. Asp-130 contacts K(+). Thr-133 is an ATP binding site. Thr-185 contacts substrate.

This sequence belongs to the type III pantothenate kinase family. In terms of assembly, homodimer. The cofactor is NH4(+). K(+) serves as cofactor.

The protein localises to the cytoplasm. The catalysed reaction is (R)-pantothenate + ATP = (R)-4'-phosphopantothenate + ADP + H(+). Its pathway is cofactor biosynthesis; coenzyme A biosynthesis; CoA from (R)-pantothenate: step 1/5. In terms of biological role, catalyzes the phosphorylation of pantothenate (Pan), the first step in CoA biosynthesis. The sequence is that of Type III pantothenate kinase from Rhodospirillum centenum (strain ATCC 51521 / SW).